Consider the following 891-residue polypeptide: Aconitate hydratase A (891 aa).

Residues Cys435, Cys501, and Cys504 each coordinate [4Fe-4S] cluster.

It belongs to the aconitase/IPM isomerase family. As to quaternary structure, monomer. Requires [4Fe-4S] cluster as cofactor.

The catalysed reaction is citrate = D-threo-isocitrate. It carries out the reaction (2S,3R)-3-hydroxybutane-1,2,3-tricarboxylate = 2-methyl-cis-aconitate + H2O. Its pathway is carbohydrate metabolism; tricarboxylic acid cycle; isocitrate from oxaloacetate: step 2/2. The protein operates within organic acid metabolism; propanoate degradation. Involved in the catabolism of short chain fatty acids (SCFA) via the tricarboxylic acid (TCA)(acetyl degradation route) and probably the 2-methylcitrate cycle I (propionate degradation route). Catalyzes the reversible isomerization of citrate to isocitrate via cis-aconitate. The apo form of AcnA functions as a RNA-binding regulatory protein. Could catalyze the hydration of 2-methyl-cis-aconitate to yield (2R,3S)-2-methylisocitrate. The sequence is that of Aconitate hydratase A (acn) from Legionella pneumophila subsp. pneumophila (strain Philadelphia 1 / ATCC 33152 / DSM 7513).